The primary structure comprises 266 residues: MLKVEPIPAFQDNYIWAIHDGHSAAVVDPGEAAPVEQFLAQRGLALGAIVITHHHGDHQGGVSDLLARHPSGPNGEPLPVIGPQGERIGHRTQAVREGDTVTLRHPAVTFRVLDVPGHTAGHVAYVGDLPGAGPVVFCGDTLFASGCGRLFEGTPAQMLASLDKLAALPGDTRVYCAHEYTRSNVRFAQAVEPANPDLAAWAARVDILREAGTPTVPTTVAHERAVNPFLRSRESTVRQAVRAQGGDVSGDAAAFGALRGWKDGFR.

Zn(2+) contacts are provided by histidine 53, histidine 55, aspartate 57, histidine 58, histidine 118, aspartate 140, and histidine 178.

The protein belongs to the metallo-beta-lactamase superfamily. Glyoxalase II family. In terms of assembly, monomer. The cofactor is Zn(2+).

The catalysed reaction is an S-(2-hydroxyacyl)glutathione + H2O = a 2-hydroxy carboxylate + glutathione + H(+). The protein operates within secondary metabolite metabolism; methylglyoxal degradation; (R)-lactate from methylglyoxal: step 2/2. Its function is as follows. Thiolesterase that catalyzes the hydrolysis of S-D-lactoyl-glutathione to form glutathione and D-lactic acid. In Cupriavidus metallidurans (strain ATCC 43123 / DSM 2839 / NBRC 102507 / CH34) (Ralstonia metallidurans), this protein is Hydroxyacylglutathione hydrolase.